The following is a 567-amino-acid chain: Proline--tRNA ligase (567 aa).

Belongs to the class-II aminoacyl-tRNA synthetase family. ProS type 1 subfamily. Homodimer.

It is found in the cytoplasm. The catalysed reaction is tRNA(Pro) + L-proline + ATP = L-prolyl-tRNA(Pro) + AMP + diphosphate. Functionally, catalyzes the attachment of proline to tRNA(Pro) in a two-step reaction: proline is first activated by ATP to form Pro-AMP and then transferred to the acceptor end of tRNA(Pro). As ProRS can inadvertently accommodate and process non-cognate amino acids such as alanine and cysteine, to avoid such errors it has two additional distinct editing activities against alanine. One activity is designated as 'pretransfer' editing and involves the tRNA(Pro)-independent hydrolysis of activated Ala-AMP. The other activity is designated 'posttransfer' editing and involves deacylation of mischarged Ala-tRNA(Pro). The misacylated Cys-tRNA(Pro) is not edited by ProRS. In Staphylococcus aureus (strain USA300), this protein is Proline--tRNA ligase.